Here is an 830-residue protein sequence, read N- to C-terminus: Lon protease (830 aa).

Positions 1–28 are disordered; that stretch reads MTFDTNDDSIAKNSLAPYNQETEQQQEE. In terms of domain architecture, Lon N-terminal spans 50-245; sequence IPILPLRDVV…LVITHLTHEA (196 aa). 397-404 is an ATP binding site; the sequence is GPPGVGKT. Positions 633-814 constitute a Lon proteolytic domain; sequence TLPPGVALGL…DEVLPLAFSE (182 aa). Active-site residues include S720 and K763.

Belongs to the peptidase S16 family. As to quaternary structure, homohexamer. Organized in a ring with a central cavity.

It is found in the cytoplasm. The enzyme catalyses Hydrolysis of proteins in presence of ATP.. ATP-dependent serine protease that mediates the selective degradation of mutant and abnormal proteins as well as certain short-lived regulatory proteins. Required for cellular homeostasis and for survival from DNA damage and developmental changes induced by stress. Degrades polypeptides processively to yield small peptide fragments that are 5 to 10 amino acids long. Binds to DNA in a double-stranded, site-specific manner. This Lawsonia intracellularis (strain PHE/MN1-00) protein is Lon protease.